The chain runs to 219 residues: ATP-dependent Clp protease proteolytic subunit 1, mitochondrial (219 aa).

Residues 1 to 23 (MLRRILTTSSVRNLTSSTQARVG) constitute a mitochondrion transit peptide. Catalysis depends on Ser118, which acts as the Nucleophile. Residue His143 is part of the active site.

This sequence belongs to the peptidase S14 family. As to quaternary structure, tetradecamer that assembles into a two heptameric rings with a central cavity.

The protein localises to the mitochondrion matrix. It carries out the reaction Hydrolysis of proteins to small peptides in the presence of ATP and magnesium. alpha-casein is the usual test substrate. In the absence of ATP, only oligopeptides shorter than five residues are hydrolyzed (such as succinyl-Leu-Tyr-|-NHMec, and Leu-Tyr-Leu-|-Tyr-Trp, in which cleavage of the -Tyr-|-Leu- and -Tyr-|-Trp bonds also occurs).. In terms of biological role, clp cleaves peptides in various proteins in a process that requires ATP hydrolysis. Clp may be responsible for a fairly general and central housekeeping function rather than for the degradation of specific substrates. In Caenorhabditis briggsae, this protein is ATP-dependent Clp protease proteolytic subunit 1, mitochondrial.